The chain runs to 63 residues: Large ribosomal subunit protein uL29 (63 aa).

This sequence belongs to the universal ribosomal protein uL29 family.

The chain is Large ribosomal subunit protein uL29 from Sulfurovum sp. (strain NBC37-1).